A 115-amino-acid chain; its full sequence is Aspartate 1-decarboxylase (115 aa).

S25 functions as the Schiff-base intermediate with substrate; via pyruvic acid in the catalytic mechanism. The residue at position 25 (S25) is a Pyruvic acid (Ser). Residue T57 coordinates substrate. The active-site Proton donor is Y58. 73–75 (GPA) is a binding site for substrate.

It belongs to the PanD family. As to quaternary structure, heterooctamer of four alpha and four beta subunits. The cofactor is pyruvate. In terms of processing, is synthesized initially as an inactive proenzyme, which is activated by self-cleavage at a specific serine bond to produce a beta-subunit with a hydroxyl group at its C-terminus and an alpha-subunit with a pyruvoyl group at its N-terminus.

Its subcellular location is the cytoplasm. The enzyme catalyses L-aspartate + H(+) = beta-alanine + CO2. It participates in cofactor biosynthesis; (R)-pantothenate biosynthesis; beta-alanine from L-aspartate: step 1/1. Functionally, catalyzes the pyruvoyl-dependent decarboxylation of aspartate to produce beta-alanine. This Cytophaga hutchinsonii (strain ATCC 33406 / DSM 1761 / CIP 103989 / NBRC 15051 / NCIMB 9469 / D465) protein is Aspartate 1-decarboxylase.